A 378-amino-acid polypeptide reads, in one-letter code: Quinolinate synthase (378 aa).

Residues histidine 59 and serine 80 each contribute to the iminosuccinate site. Cysteine 125 is a binding site for [4Fe-4S] cluster. Iminosuccinate is bound by residues 151-153 and serine 168; that span reads YAN. Cysteine 212 contributes to the [4Fe-4S] cluster binding site. Iminosuccinate contacts are provided by residues 238 to 240 and threonine 255; that span reads HPE. Cysteine 309 contacts [4Fe-4S] cluster.

It belongs to the quinolinate synthase family. Type 1 subfamily. [4Fe-4S] cluster is required as a cofactor.

It is found in the cytoplasm. The catalysed reaction is iminosuccinate + dihydroxyacetone phosphate = quinolinate + phosphate + 2 H2O + H(+). It functions in the pathway cofactor biosynthesis; NAD(+) biosynthesis; quinolinate from iminoaspartate: step 1/1. Catalyzes the condensation of iminoaspartate with dihydroxyacetone phosphate to form quinolinate. This is Quinolinate synthase from Burkholderia lata (strain ATCC 17760 / DSM 23089 / LMG 22485 / NCIMB 9086 / R18194 / 383).